The primary structure comprises 547 residues: NXPE family member 1 (547 aa).

The signal sequence occupies residues 1-21 (MSSNTMLQKTLLILISFSVVT). Asn-39 and Asn-211 each carry an N-linked (GlcNAc...) asparagine glycan.

It belongs to the NXPE family.

It is found in the secreted. The polypeptide is NXPE family member 1 (NXPE1) (Homo sapiens (Human)).